An 84-amino-acid polypeptide reads, in one-letter code: Cell division topological specificity factor (84 aa).

This sequence belongs to the MinE family.

Prevents the cell division inhibition by proteins MinC and MinD at internal division sites while permitting inhibition at polar sites. This ensures cell division at the proper site by restricting the formation of a division septum at the midpoint of the long axis of the cell. The protein is Cell division topological specificity factor of Rhodopseudomonas palustris (strain BisA53).